The following is a 206-amino-acid chain: Small ribosomal subunit protein uS4 (206 aa).

The S4 RNA-binding domain occupies 96-156 (TRLDNVVYRM…EKSKKQARII (61 aa)).

This sequence belongs to the universal ribosomal protein uS4 family. As to quaternary structure, part of the 30S ribosomal subunit. Contacts protein S5. The interaction surface between S4 and S5 is involved in control of translational fidelity.

In terms of biological role, one of the primary rRNA binding proteins, it binds directly to 16S rRNA where it nucleates assembly of the body of the 30S subunit. Its function is as follows. With S5 and S12 plays an important role in translational accuracy. The polypeptide is Small ribosomal subunit protein uS4 (Shewanella woodyi (strain ATCC 51908 / MS32)).